The following is a 254-amino-acid chain: MALQQSMAMPMMVVSDLGTAPRSSPMVQLQRMKKHLVVVAAFKSRTKASPKVDKSNKNKSIVEDGIFGTSGGIGFTKENELFVGRVAMLGFAASLLGEAVTGKGILAQLNLETGIPIYEAEPLLLFFILFTLLGAIGALGDRGRFVDDATGLERAVIPPGKGFRAALGLSEGGPLFGFTKANELFVGRLAQLGIAFSLIGEIITGKGALAQLNIETGVPINEIEPLLLFNILFFFFAAINPGTGKFVTDDNDDQ.

Residues methionine 1–valine 38 constitute a chloroplast transit peptide. A run of 2 repeats spans residues phenylalanine 42–aspartate 148 and alanine 149–aspartate 253. Transmembrane regions (helical) follow at residues valine 86–leucine 106, alanine 120–glycine 140, leucine 184–threonine 204, and proline 219–isoleucine 239.

This sequence belongs to the ELIP/psbS family.

The protein localises to the plastid. It is found in the chloroplast thylakoid membrane. In terms of biological role, involved in high light-mediated energy-dependent nonphotochemical quenching (NPQ, qE) and thermal dissipation (TD) thus regulating energy conversion in photosystem II and protecting from photoinhibition. Also seems to regulate quantum yield of electron transport in fluctuating light conditions. This chain is Photosystem II 22 kDa protein 2, chloroplastic, found in Oryza sativa subsp. japonica (Rice).